A 216-amino-acid chain; its full sequence is Redox-sensing transcriptional repressor Rex (216 aa).

Positions 20-59 (QYYRLFKSLVEENVTRTNSQLISEKIGVDAATIRRDFSLF) form a DNA-binding region, H-T-H motif. 94–99 (GVGNLG) contributes to the NAD(+) binding site.

It belongs to the transcriptional regulatory Rex family. As to quaternary structure, homodimer.

It is found in the cytoplasm. Modulates transcription in response to changes in cellular NADH/NAD(+) redox state. This Lactococcus lactis subsp. cremoris (Streptococcus cremoris) protein is Redox-sensing transcriptional repressor Rex.